The primary structure comprises 690 residues: Calpain-9 (690 aa).

Residues 1 to 24 form a disordered region; the sequence is MPYLHRSLRPQPQPVPRDARTVHS. Positions 42 to 337 constitute a Calpain catalytic domain; that stretch reads LFEDADFPAS…FDKVEICNLT (296 aa). Leu-81, Gly-83, and Asp-88 together coordinate Ca(2+). Residue Cys-97 is part of the active site. Glu-167 serves as a coordination point for Ca(2+). Residues His-254 and Asn-278 contribute to the active site. Glu-284, Asp-291, Leu-312, Asp-314, and Glu-316 together coordinate Ca(2+). The interval 338–521 is domain III; it reads PDALEDNTLH…PQEEETEEER (184 aa). The tract at residues 522-690 is domain IV; sequence QFRALFRRIA…NEFINLTMNI (169 aa). 3 consecutive EF-hand domains span residues 534–552, 561–589, and 591–626; these read DMEV…VLQK, LSLL…FRVF, and DKLR…AGFQ. Residues Asp-574, Ser-576, Asn-578, Lys-580, Glu-585, Asp-604, Asp-606, Ser-608, Thr-610, and Glu-615 each contribute to the Ca(2+) site.

This sequence belongs to the peptidase C2 family. As to expression, predominantly expressed in stomach and small intestine, although low levels of expression in other organs.

Functionally, calcium-regulated non-lysosomal thiol-protease. The polypeptide is Calpain-9 (Capn9) (Rattus norvegicus (Rat)).